A 181-amino-acid polypeptide reads, in one-letter code: MKREMRQDRKAQPKAPINENISAREVRLIGVDGEQIGIVSIDEALRVAEEAKLDLVEISADAVPPVCRIMDYGKHLFEKKKQVAAAKKNQKQVQIKEIKFRPGTEEGDYQVKLRNLVRFLNDGDKAKVSLRFRGREMAHQELGMELLKRVENDLAEFGTVEQYPKLEGRQLMMVIAPKKRK.

Belongs to the IF-3 family. Monomer.

It localises to the cytoplasm. In terms of biological role, IF-3 binds to the 30S ribosomal subunit and shifts the equilibrium between 70S ribosomes and their 50S and 30S subunits in favor of the free subunits, thus enhancing the availability of 30S subunits on which protein synthesis initiation begins. The chain is Translation initiation factor IF-3 from Azotobacter vinelandii.